We begin with the raw amino-acid sequence, 732 residues long: Alpha-galactosidase Mel36A (732 aa).

Substrate-binding positions include 370–371, Trp-415, Arg-447, 480–484, 530–533, and Asp-552; these read DD, KWDMN, and CSGG. Catalysis depends on Asp-482, which acts as the Nucleophile. Residue Asp-552 is the Proton donor of the active site.

This sequence belongs to the glycosyl hydrolase 36 family. Homotetramer.

The enzyme catalyses Hydrolysis of terminal, non-reducing alpha-D-galactose residues in alpha-D-galactosides, including galactose oligosaccharides, galactomannans and galactolipids.. In terms of biological role, hydrolyzes the short-chain alpha-galactosaccharide raffinose. The chain is Alpha-galactosidase Mel36A from Lactobacillus acidophilus (strain ATCC 700396 / NCK56 / N2 / NCFM).